A 795-amino-acid polypeptide reads, in one-letter code: Copper-exporting P-type ATPase (795 aa).

HMA domains lie at 5 to 70 and 72 to 138; these read QNAT…YDVV and DKAE…YDAQ. Cu(+) is bound by residues Cys-16, Cys-19, Cys-83, and Cys-86. 6 helical membrane passes run 161-181, 187-207, 224-244, 256-276, 412-432, and 440-460; these read LMIS…HLFN, ILMN…IIGW, MDVL…YEMI, LYFE…YLEA, YFVP…ITLV, and ALVA…GLAT. Asp-496 functions as the 4-aspartylphosphate intermediate in the catalytic mechanism. Asp-690 and Asp-694 together coordinate Mg(2+). A run of 2 helical transmembrane segments spans residues 747-764 and 770-788; these read NLFW…IAAM and WIAG…SNAL.

Belongs to the cation transport ATPase (P-type) (TC 3.A.3) family. Type IB subfamily.

It localises to the cell membrane. It carries out the reaction Cu(+)(in) + ATP + H2O = Cu(+)(out) + ADP + phosphate + H(+). Involved in copper export. The chain is Copper-exporting P-type ATPase (copA) from Staphylococcus haemolyticus (strain JCSC1435).